Here is a 372-residue protein sequence, read N- to C-terminus: Queuine tRNA-ribosyltransferase (372 aa).

The active-site Proton acceptor is Asp89. Substrate is bound by residues 89–93, Asp143, Gln185, and Gly212; that span reads DSGGF. An RNA binding region spans residues 243–249; sequence GVGKPED. Asp262 serves as the catalytic Nucleophile. The tract at residues 267–271 is RNA binding; important for wobble base 34 recognition; that stretch reads TRNAR. Residues Cys300, Cys302, Cys305, and His331 each coordinate Zn(2+).

It belongs to the queuine tRNA-ribosyltransferase family. As to quaternary structure, homodimer. Within each dimer, one monomer is responsible for RNA recognition and catalysis, while the other monomer binds to the replacement base PreQ1. The cofactor is Zn(2+).

It catalyses the reaction 7-aminomethyl-7-carbaguanine + guanosine(34) in tRNA = 7-aminomethyl-7-carbaguanosine(34) in tRNA + guanine. The protein operates within tRNA modification; tRNA-queuosine biosynthesis. In terms of biological role, catalyzes the base-exchange of a guanine (G) residue with the queuine precursor 7-aminomethyl-7-deazaguanine (PreQ1) at position 34 (anticodon wobble position) in tRNAs with GU(N) anticodons (tRNA-Asp, -Asn, -His and -Tyr). Catalysis occurs through a double-displacement mechanism. The nucleophile active site attacks the C1' of nucleotide 34 to detach the guanine base from the RNA, forming a covalent enzyme-RNA intermediate. The proton acceptor active site deprotonates the incoming PreQ1, allowing a nucleophilic attack on the C1' of the ribose to form the product. After dissociation, two additional enzymatic reactions on the tRNA convert PreQ1 to queuine (Q), resulting in the hypermodified nucleoside queuosine (7-(((4,5-cis-dihydroxy-2-cyclopenten-1-yl)amino)methyl)-7-deazaguanosine). This chain is Queuine tRNA-ribosyltransferase, found in Pseudomonas aeruginosa (strain LESB58).